Consider the following 323-residue polypeptide: tRNA (guanine(9)-N1)-methyltransferase (323 aa).

The segment covering 1 to 16 (MTEQTSEATVVNNSPA) has biased composition (polar residues). Disordered stretches follow at residues 1–34 (MTEQTSEATVVNNSPAPTIPKIKREKPTPEEIEE) and 192–215 (TGAPNSESKDNDGNSNSNTTNSTD). The span at 25 to 34 (EKPTPEEIEE) shows a compositional bias: basic and acidic residues. The region spanning 99–319 (KAQPIPSRQI…KVLPPRKIKS (221 aa)) is the SAM-dependent MTase TRM10-type domain. The span at 204-215 (GNSNSNTTNSTD) shows a compositional bias: low complexity. S-adenosyl-L-methionine-binding positions include 225-226 (LT), glycine 245, 249-253 (DKNRH), cysteine 257, leucine 271, and 283-285 (HVL). The Proton acceptor role is filled by aspartate 249.

The protein belongs to the class IV-like SAM-binding methyltransferase superfamily. TRM10 family. Monomer.

Its subcellular location is the cytoplasm. The protein resides in the nucleus. The enzyme catalyses guanosine(9) in tRNA + S-adenosyl-L-methionine = N(1)-methylguanosine(9) in tRNA + S-adenosyl-L-homocysteine + H(+). In terms of biological role, S-adenosyl-L-methionine-dependent guanine N(1)-methyltransferase that catalyzes the formation of N(1)-methylguanine at position 9 (m1G9) in cytoplasmic tRNA. The chain is tRNA (guanine(9)-N1)-methyltransferase from Candida albicans (strain SC5314 / ATCC MYA-2876) (Yeast).